We begin with the raw amino-acid sequence, 792 residues long: Phosphatidylinositol 4-phosphate 5-kinase type-1 sktl (792 aa).

Over residues Met-1–Gln-21 the composition is skewed to basic and acidic residues. Disordered regions lie at residues Met-1–Thr-74, Thr-105–Gly-139, Ala-423–Glu-446, Thr-577–Ala-612, and Ala-640–Ser-714. 2 stretches are compositionally biased toward polar residues: residues Gln-52–Pro-62 and Thr-105–Gly-131. One can recognise a PIPK domain in the interval Gln-155 to Val-573. A compositionally biased stretch (low complexity) spans Ser-642–Asn-658. The span at Glu-678–Asp-702 shows a compositional bias: polar residues.

In terms of assembly, interacts with ash2 (via B30.2/SPRY domain); the interaction is direct and seems to be specific for ash2 isoform B.

The protein localises to the cytoplasm. Its subcellular location is the cell cortex. It is found in the nucleus. It localises to the chromosome. The protein resides in the apical cell membrane. The protein localises to the cell projection. Its subcellular location is the cilium. It is found in the flagellum membrane. It carries out the reaction a 1,2-diacyl-sn-glycero-3-phospho-(1D-myo-inositol 4-phosphate) + ATP = a 1,2-diacyl-sn-glycero-3-phospho-(1D-myo-inositol-4,5-bisphosphate) + ADP + H(+). Functionally, catalyzes the phosphorylation of phosphatidylinositol 4-phosphate (PtdIns[4]P) to form phosphatidylinositol 4,5-bisphosphate (PtdIns[4,5]P(2)), a lipid second messenger that regulates several cellular processes such as signal transduction, vesicle trafficking, actin cytoskeleton dynamics, cell adhesion, and cell motility. PtdIns[4,5]P(2) can directly act as a second messenger or can be utilized as a precursor to generate other second messengers: inositol 1,4,5-trisphosphate (IP3), diacylglycerol (DAG) or phosphatidylinositol-3,4,5-trisphosphate (PtdIns[3,4,5]P(3)). Required for germline development during oogenesis. Sktl is the major phosphatidylinositol 4-phosphate 5-kinase responsible for enrichment of PtdIns[4,5]P(2) in the apical plasma membrane of the oocyte and follicular epithelium cells of the egg chamber during oogenesis. Involved in nuclear anchoring and microtubule organization required for targeted mRNA transport during maintenance of oocyte polarity. The PtdIns[4,5]P(2) produced by sktl is required for maintenance of cellular polarity, prevention of the epithelial-mesenchymal transition process, maintenance of adherens junctions and regulation of apical constriction, probably by affecting polarized cortical recruitment of PAR proteins and their effectors, including baz/bazooka, aPKC, par-1 and l(2)gl. Involved in actin cytoskeleton organization probably through PtdIns[4,5]P(2)-mediated regulation of Moe/Moesin phosphorylation. Involved in PtdIns[4,5]P(2)-mediated apical recruitment of the formin dia/diaphanous in tubular epithelial cells. Involved in anterodorsal cell morphogenesis and eggshell dorsal appendage formation, probably through regulation of apical constriction by PtdIns[4,5]P(2) during tubulogenesis. Required for cell viability or proliferation during wing and eye imaginal disk development. May be involved in cytoskeletal regulation during sensory bristle development. Together with mys/integrin beta localizes to the trailing edge of larval epidermal cells in a JNK signaling-dependent manner during wound healing and is required for setting up cell polarity and re-epithelialization. Required for polarization of elongating spermatid cysts possibly by generation of PtdIns[4,5]P(2) involved in mediating membrane association and orientation of the nucleus-basal body pair. Probably involved in PtdIns[4,5]P(2)-mediated recruitment of exocyst proteins that may mediate membrane addition during spermatid elongation. Involved in maintenance of specialised cell contacts known as slit diaphragms required for nephrocyte morphogenesis and function. Regulates nephrocyte endocytosis, possibly through PtdIns[4,5]P(2)-mediated recruitment of effector proteins. Not required for nervous system development or neurotransmitter release at the neuromuscular junction. Together with ash2 probably plays a role in maintenance of transcriptionally active chromatin through down-regulation of histone H1 hyperphosphorylation. This is Phosphatidylinositol 4-phosphate 5-kinase type-1 sktl from Drosophila melanogaster (Fruit fly).